A 657-amino-acid chain; its full sequence is Glycogen debranching enzyme (657 aa).

Aspartate 336 serves as the catalytic Nucleophile. Catalysis depends on glutamate 371, which acts as the Proton donor. A compositionally biased stretch (basic and acidic residues) spans 458-467 (NEANGEENRD). The disordered stretch occupies residues 458 to 479 (NEANGEENRDGTNNNYSNNHGK).

This sequence belongs to the glycosyl hydrolase 13 family.

It carries out the reaction Hydrolysis of (1-&gt;6)-alpha-D-glucosidic linkages to branches with degrees of polymerization of three or four glucose residues in limit dextrin.. It participates in glycan degradation; glycogen degradation. Its function is as follows. Removes maltotriose and maltotetraose chains that are attached by 1,6-alpha-linkage to the limit dextrin main chain, generating a debranched limit dextrin. The chain is Glycogen debranching enzyme from Escherichia coli (strain K12 / DH10B).